A 133-amino-acid polypeptide reads, in one-letter code: NAD(P)H-quinone oxidoreductase subunit 3 (133 aa).

3 helical membrane-spanning segments follow: residues 22–44 (YLLGFLLISSLVPILSLTASRLL), 77–97 (MFALVFVIFDVETVFLYPWAV), and 102–122 (LGLLAFVEALIFITILVVGLA).

This sequence belongs to the complex I subunit 3 family. As to quaternary structure, NDH-1 can be composed of about 15 different subunits; different subcomplexes with different compositions have been identified which probably have different functions.

The protein localises to the cellular thylakoid membrane. The catalysed reaction is a plastoquinone + NADH + (n+1) H(+)(in) = a plastoquinol + NAD(+) + n H(+)(out). It catalyses the reaction a plastoquinone + NADPH + (n+1) H(+)(in) = a plastoquinol + NADP(+) + n H(+)(out). Functionally, NDH-1 shuttles electrons from an unknown electron donor, via FMN and iron-sulfur (Fe-S) centers, to quinones in the respiratory and/or the photosynthetic chain. The immediate electron acceptor for the enzyme in this species is believed to be plastoquinone. Couples the redox reaction to proton translocation, and thus conserves the redox energy in a proton gradient. Cyanobacterial NDH-1 also plays a role in inorganic carbon-concentration. This Synechococcus sp. (strain ATCC 27144 / PCC 6301 / SAUG 1402/1) (Anacystis nidulans) protein is NAD(P)H-quinone oxidoreductase subunit 3.